Here is a 298-residue protein sequence, read N- to C-terminus: MSIELDWTGLEKSFADSLCERLNAALADMDMPTFLGPTRVQAIELGSEGPDVQVIHIGHVWREFREAAVHASSASDKYNARATTPPRMPMRLRTFRQYDDNDLPTSVHGGADADSIASEHEESLSRWSDTESETGTCDSSSLWEEQTRLSDIPSLQMHLSVQWLTSTMRLSLTTSLKIAYNNDTIMSLPISLVVTGMELFAQAIVALDGVHRCVYLSLSEDSTEECAPDGLRAVHDARIRTRHQGQRILPFLALESKVGESAKHVLENVGKVERFVGDMLRQWLEDELVYPHFYTLYL.

The SMP-LTD domain maps to 1-298; it reads MSIELDWTGL…VYPHFYTLYL (298 aa). The segment at 118–142 is disordered; sequence SEHEESLSRWSDTESETGTCDSSSL. The span at 133–142 shows a compositional bias: polar residues; that stretch reads ETGTCDSSSL.

It belongs to the MDM12 family. Component of the ER-mitochondria encounter structure (ERMES) or MDM complex, composed of MMM1, MDM10, MDM12 and MDM34. An MMM1 homodimer associates with one molecule of MDM12 on each side in a pairwise head-to-tail manner, and the SMP-LTD domains of MMM1 and MDM12 generate a continuous hydrophobic tunnel for phospholipid trafficking.

The protein resides in the mitochondrion outer membrane. The protein localises to the endoplasmic reticulum membrane. Functionally, component of the ERMES/MDM complex, which serves as a molecular tether to connect the endoplasmic reticulum (ER) and mitochondria. Components of this complex are involved in the control of mitochondrial shape and protein biogenesis, and function in nonvesicular lipid trafficking between the ER and mitochondria. MDM12 is required for the interaction of the ER-resident membrane protein MMM1 and the outer mitochondrial membrane-resident beta-barrel protein MDM10. The MDM12-MMM1 subcomplex functions in the major beta-barrel assembly pathway that is responsible for biogenesis of all mitochondrial outer membrane beta-barrel proteins, and acts in a late step after the SAM complex. The MDM10-MDM12-MMM1 subcomplex further acts in the TOM40-specific pathway after the action of the MDM12-MMM1 complex. Essential for establishing and maintaining the structure of mitochondria and maintenance of mtDNA nucleoids. The polypeptide is Mitochondrial distribution and morphology protein 12 (Malassezia globosa (strain ATCC MYA-4612 / CBS 7966) (Dandruff-associated fungus)).